Consider the following 146-residue polypeptide: UPF0178 protein BCAH820_3075 (146 aa).

The protein belongs to the UPF0178 family.

The chain is UPF0178 protein BCAH820_3075 from Bacillus cereus (strain AH820).